Reading from the N-terminus, the 139-residue chain is D-ribose pyranase (139 aa).

The active-site Proton donor is H20. Substrate-binding positions include D28, H106, and 128–130 (YAN).

It belongs to the RbsD / FucU family. RbsD subfamily. In terms of assembly, homodecamer.

It is found in the cytoplasm. The enzyme catalyses beta-D-ribopyranose = beta-D-ribofuranose. The protein operates within carbohydrate metabolism; D-ribose degradation; D-ribose 5-phosphate from beta-D-ribopyranose: step 1/2. In terms of biological role, catalyzes the interconversion of beta-pyran and beta-furan forms of D-ribose. The protein is D-ribose pyranase of Edwardsiella ictaluri (strain 93-146).